Reading from the N-terminus, the 101-residue chain is Ribonuclease kappa-B (101 aa).

2 helical membrane passes run 13–33 (ACGI…GVFF) and 68–88 (VSYN…FSFC).

This sequence belongs to the RNase K family.

Its subcellular location is the membrane. Its function is as follows. Endoribonuclease which preferentially cleaves ApU and ApG phosphodiester bonds. The chain is Ribonuclease kappa-B (rnasek-b) from Xenopus laevis (African clawed frog).